The chain runs to 721 residues: MAAPVVAPPGVVVSRANKRSGAGPGGSGGGGARGAEEEPPPPLQAVLVADSFDRRFFPISKDQPRVLLPLANVALIDYTLEFLTATGVQETFVFCCWKAAQIKEHLLKSKWCRPTSLNVVRIITSELYRSLGDVLRDVDAKALVRSDFLLVYGDVISNINITRALEEHRLRRKLEKNVSVMTMIFKESSPSHPTRCHEDNVVVAVDSTTNRVLHFQKTQGLRRFAFPLSLFQGSSDGVEVRYDLLDCHISICSPQVAQLFTDNFDYQTRDDFVRGLLVNEEILGNQIHMHVTAKEYGARVSNLHMYSAVCADVIRRWVYPLTPEANFTDSTTQSCTHSRHNIYRGPEVSLGHGSILEENVLLGSGTVIGSNCFITNSVIGPGCHIGDNVVLDQTYLWQGVRVAAGAQIHQSLLCDNAEVKERVTLKPRSVLTSQVVVGPNITLPEGSVISLHPPDAEEDEDDGEFSDDSGADQEKDKVKMKGYNPAEVGAAGKGYLWKAAGMNMEEEEELQQNLWGLKINMEEESESESEQSMDSEEPDSRGGSPQMDDIKVFQNEVLGTLQRGKEENISCDNLVLEINSLKYAYNISLKEVMQVLSHVVLEFPLQQMDSPLDSSRYCALLLPLLKAWSPVFRNYIKRAADHLEALAAIEDFFLEHEALGISMAKVLMAFYQLEILAEETILSWFSQRDTTDKGQQLRKNQQLQRFIQWLKEAEEESSEDD.

Positions 1-13 (MAAPVVAPPGVVV) are enriched in low complexity. A disordered region spans residues 1–40 (MAAPVVAPPGVVVSRANKRSGAGPGGSGGGGARGAEEEPP). Alanine 2 bears the N-acetylalanine mark. Arginine 19 carries the omega-N-methylarginine modification. Gly residues predominate over residues 22–33 (AGPGGSGGGGAR). Serine 27 carries the phosphoserine modification. Residues lysine 61 and lysine 103 each participate in a glycyl lysine isopeptide (Lys-Gly) (interchain with G-Cter in ubiquitin) cross-link. Phosphoserine is present on serine 130. Residues lysine 141 and lysine 217 each participate in a glycyl lysine isopeptide (Lys-Gly) (interchain with G-Cter in ubiquitin) cross-link. Residue threonine 322 is modified to Phosphothreonine. Disordered regions lie at residues 444 to 483 (PEGS…MKGY) and 523 to 547 (EESE…SPQM). Phosphoserine occurs at positions 450, 466, 469, 532, and 540. Acidic residues-rich tracts occupy residues 456–471 (AEED…DSGA) and 523–537 (EESE…DSEE). One can recognise a W2 domain in the interval 543–720 (GSPQMDDIKV…KEAEEESSED (178 aa)). Phosphoserine; by DYRK2 is present on serine 544. Serine 717 is modified (phosphoserine).

This sequence belongs to the eIF-2B gamma/epsilon subunits family. Component of the translation initiation factor 2B (eIF2B) complex which is a heterodecamer of two sets of five different subunits: alpha, beta, gamma, delta and epsilon. Subunits alpha, beta and delta comprise a regulatory subcomplex and subunits epsilon and gamma comprise a catalytic subcomplex. Within the complex, the hexameric regulatory complex resides at the center, with the two heterodimeric catalytic subcomplexes bound on opposite sides. In terms of processing, phosphorylated at Ser-544 by DYRK2; this is required for subsequent phosphorylation by GSK3B. Phosphorylated on serine and threonine residues by GSK3B; phosphorylation inhibits its function. Post-translationally, polyubiquitinated, probably by NEDD4.

Its subcellular location is the cytoplasm. The protein resides in the cytosol. With respect to regulation, activated by the chemical integrated stress response (ISR) inhibitor ISRIB which stimulates guanine nucleotide exchange factor activity for both phosphorylated and unphosphorylated eIF2. Functionally, acts as a component of the translation initiation factor 2B (eIF2B) complex, which catalyzes the exchange of GDP for GTP on eukaryotic initiation factor 2 (eIF2) gamma subunit. Its guanine nucleotide exchange factor activity is repressed when bound to eIF2 complex phosphorylated on the alpha subunit, thereby limiting the amount of methionyl-initiator methionine tRNA available to the ribosome and consequently global translation is repressed. The protein is Translation initiation factor eIF2B subunit epsilon (EIF2B5) of Homo sapiens (Human).